A 104-amino-acid polypeptide reads, in one-letter code: Large ribosomal subunit protein bL27 (104 aa).

Positions 1-15 (MNNKYFLTKIDLQFF) are excised as a propeptide.

The protein belongs to the bacterial ribosomal protein bL27 family. Post-translationally, the N-terminus is cleaved by ribosomal processing cysteine protease Prp.

The protein is Large ribosomal subunit protein bL27 of Mycoplasma pneumoniae (strain ATCC 29342 / M129 / Subtype 1) (Mycoplasmoides pneumoniae).